Consider the following 457-residue polypeptide: tRNA modification GTPase MnmE (457 aa).

(6S)-5-formyl-5,6,7,8-tetrahydrofolate contacts are provided by Arg-25, Glu-87, and Arg-126. In terms of domain architecture, TrmE-type G spans 223–377; sequence GISTAIIGRP…IEERINNLFF (155 aa). K(+) is bound at residue Asn-233. GTP contacts are provided by residues 233–238, 252–258, and 277–280; these read NVGKSS, TDIAGTT, and DTAG. Ser-237 lines the Mg(2+) pocket. Residues Thr-252, Ile-254, and Thr-257 each coordinate K(+). Thr-258 contacts Mg(2+). Residue Lys-457 participates in (6S)-5-formyl-5,6,7,8-tetrahydrofolate binding.

Belongs to the TRAFAC class TrmE-Era-EngA-EngB-Septin-like GTPase superfamily. TrmE GTPase family. Homodimer. Heterotetramer of two MnmE and two MnmG subunits. The cofactor is K(+).

It is found in the cytoplasm. Exhibits a very high intrinsic GTPase hydrolysis rate. Involved in the addition of a carboxymethylaminomethyl (cmnm) group at the wobble position (U34) of certain tRNAs, forming tRNA-cmnm(5)s(2)U34. The polypeptide is tRNA modification GTPase MnmE (Streptococcus pneumoniae serotype 4 (strain ATCC BAA-334 / TIGR4)).